The sequence spans 84 residues: Delta-conotoxin-like MVIB (84 aa).

An N-terminal signal peptide occupies residues 1-22; sequence MKLTCVMIVAVLFLTAWTFVTA. Positions 23 to 51 are excised as a propeptide; it reads DDSRYGLKDLFPKERHEMKNPEASKLNQR. 3 disulfide bridges follow: cysteine 54-cysteine 69, cysteine 61-cysteine 73, and cysteine 68-cysteine 77. 4-hydroxyproline is present on proline 65. Serine 83 carries the post-translational modification Serine amide.

It belongs to the conotoxin O1 superfamily. In terms of tissue distribution, expressed by the venom duct.

The protein resides in the secreted. In terms of biological role, delta-conotoxins bind to site 6 of voltage-gated sodium channels (Nav) and inhibit the inactivation process. The sequence is that of Delta-conotoxin-like MVIB from Conus magus (Magical cone).